The following is a 367-amino-acid chain: DNA replication and repair protein RecF (367 aa).

Gly-30–Thr-37 is a binding site for ATP.

This sequence belongs to the RecF family.

Its subcellular location is the cytoplasm. Its function is as follows. The RecF protein is involved in DNA metabolism; it is required for DNA replication and normal SOS inducibility. RecF binds preferentially to single-stranded, linear DNA. It also seems to bind ATP. This Leptospira biflexa serovar Patoc (strain Patoc 1 / Ames) protein is DNA replication and repair protein RecF.